Reading from the N-terminus, the 1153-residue chain is uncharacterized protein (1153 aa).

Residues 1 to 18 form the signal peptide; the sequence is MNKNIFITLLISLLLLSG. The N-palmitoyl cysteine moiety is linked to residue cysteine 19. Residue cysteine 19 is the site of S-diacylglycerol cysteine attachment. The next 4 helical transmembrane spans lie at 289–309, 393–413, 422–442, and 457–477; these read VSAI…IGNI, LGFI…FLIF, ALIT…FMLF, and ISYA…SMII.

This sequence belongs to the TrbL/VirB6 family.

Its subcellular location is the cell membrane. This is an uncharacterized protein from Rickettsia conorii (strain ATCC VR-613 / Malish 7).